The following is a 597-amino-acid chain: Bile salt-activated lipase (597 aa).

The N-terminal stretch at 1–18 (LGASRLGPSPGCLAVASA) is a signal peptide. Residues Cys-82 and Cys-98 are joined by a disulfide bond. Asn-205 carries N-linked (GlcNAc...) asparagine glycosylation. Residue Ser-212 is the Acyl-ester intermediate of the active site. The cysteines at positions 264 and 275 are disulfide-linked. Asp-338 functions as the Charge relay system in the catalytic mechanism. Asn-379 is a glycosylation site (N-linked (GlcNAc...) asparagine). His-453 (charge relay system) is an active-site residue. Residues 553–591 (AGASLLPPEDNSQASPVPPADNSGAPTEPSAGDSEVAQM) are disordered.

The protein belongs to the type-B carboxylesterase/lipase family. In terms of assembly, interacts with CLC.

It localises to the secreted. It carries out the reaction a triacylglycerol + H2O = a diacylglycerol + a fatty acid + H(+). The catalysed reaction is 1,2,3-tri-(9Z-octadecenoyl)-glycerol + H2O = di-(9Z)-octadecenoylglycerol + (9Z)-octadecenoate + H(+). It catalyses the reaction 1,2,3-trioctanoylglycerol + H2O = dioctanoylglycerol + octanoate + H(+). The enzyme catalyses a sterol ester + H2O = a sterol + a fatty acid + H(+). It carries out the reaction cholesteryl (9Z-octadecenoate) + H2O = cholesterol + (9Z)-octadecenoate + H(+). The catalysed reaction is an acetyl ester + H2O = an aliphatic alcohol + acetate + H(+). It catalyses the reaction a butanoate ester + H2O = an aliphatic alcohol + butanoate + H(+). The enzyme catalyses 9-hexadecanoyloxy-octadecanoate + H2O = 9-hydroxy-octadecanoate + hexadecanoate + H(+). It carries out the reaction 9-(9Z-octadecenoyloxy)-octadecanoate + H2O = 9-hydroxy-octadecanoate + (9Z)-octadecenoate + H(+). The catalysed reaction is 1-hexadecanoyl-sn-glycero-3-phosphocholine + H2O = sn-glycerol 3-phosphocholine + hexadecanoate + H(+). It catalyses the reaction 12-hexadecanoyloxy-octadecanoate + H2O = 12-hydroxyoctadecanoate + hexadecanoate + H(+). The enzyme catalyses 12-(9Z-octadecenoyloxy)-octadecanoate + H2O = 12-hydroxyoctadecanoate + (9Z)-octadecenoate + H(+). It carries out the reaction 13-(9Z-octadecenoyloxy)-octadecanoate + H2O = 13-hydroxy-octadecanoate + (9Z)-octadecenoate + H(+). The catalysed reaction is 9-(9Z-hexadecenoyloxy)-octadecanoate + H2O = (9Z)-hexadecenoate + 9-hydroxy-octadecanoate + H(+). It catalyses the reaction 12-(9Z-hexadecenoyloxy)-octadecanoate + H2O = 12-hydroxyoctadecanoate + (9Z)-hexadecenoate + H(+). The enzyme catalyses 13-(9Z-hexadecenoyloxy)-octadecanoate + H2O = 13-hydroxy-octadecanoate + (9Z)-hexadecenoate + H(+). It carries out the reaction 12-octadecanoyloxy-octadecanoate + H2O = 12-hydroxyoctadecanoate + octadecanoate + H(+). The catalysed reaction is 13-octadecanoyloxy-octadecanoate + H2O = 13-hydroxy-octadecanoate + octadecanoate + H(+). It catalyses the reaction 5-(9Z-hexadecenoyloxy)-octadecanoate + H2O = 5-hydroxy-octadecanoate + (9Z)-hexadecenoate + H(+). The enzyme catalyses 9-octadecanoyloxy-octadecanoate + H2O = 9-hydroxy-octadecanoate + octadecanoate + H(+). With respect to regulation, activated by bile salts such as sodium taurocholate. Functionally, catalyzes the hydrolysis of a wide range of substrates including cholesteryl esters, phospholipids, lysophospholipids, di- and tri-acylglycerols, and fatty acid esters of hydroxy fatty acids (FAHFA). Preferentially hydrolyzes FAHFAs with the ester bond further away from the carboxylate. Unsaturated FAHFAs are hydrolyzed more quickly than saturated FAHFAs. Has an essential role in the complete digestion of dietary lipids and their intestinal absorption, along with the absorption of fat-soluble vitamins. This is Bile salt-activated lipase (CEL) from Bos taurus (Bovine).